A 551-amino-acid chain; its full sequence is Protein ROOT HAIR SPECIFIC 17 (551 aa).

Residues 39 to 59 (LFPLVSAVSGCLLLILFSFST) form a helical; Signal-anchor for type II membrane protein membrane-spanning segment. Residues Asn-109 and Asn-153 are each glycosylated (N-linked (GlcNAc...) asparagine). 293–295 (HLR) contacts substrate. 2 N-linked (GlcNAc...) asparagine glycosylation sites follow: Asn-405 and Asn-465. The tract at residues 515 to 539 (KAKHVNEDDSSEYSEIGNVPISSRS) is disordered.

The protein belongs to the glycosyltransferase GT106 family. In terms of tissue distribution, specifically expressed in the root hair.

Its subcellular location is the membrane. It functions in the pathway glycan metabolism. The protein is Protein ROOT HAIR SPECIFIC 17 of Arabidopsis thaliana (Mouse-ear cress).